Here is a 485-residue protein sequence, read N- to C-terminus: Inosine-5'-monophosphate dehydrogenase (485 aa).

CBS domains are found at residues 95 to 154 (VITN…IDDV) and 155 to 215 (MTKE…AKDS). Residues Asp-249 and 299-301 (GIG) contribute to the NAD(+) site. K(+) is bound by residues Gly-301 and Gly-303. Ser-304 contributes to the IMP binding site. A K(+)-binding site is contributed by Cys-306. The active-site Thioimidate intermediate is Cys-306. Residues 339–341 (DGG), 362–363 (GS), and 386–390 (YRGMG) each bind IMP. The active-site Proton acceptor is the Arg-402. An IMP-binding site is contributed by Glu-414. 3 residues coordinate K(+): Glu-468, Ser-469, and His-470.

The protein belongs to the IMPDH/GMPR family. In terms of assembly, homotetramer. The cofactor is K(+).

It catalyses the reaction IMP + NAD(+) + H2O = XMP + NADH + H(+). The protein operates within purine metabolism; XMP biosynthesis via de novo pathway; XMP from IMP: step 1/1. With respect to regulation, mycophenolic acid (MPA) is a non-competitive inhibitor that prevents formation of the closed enzyme conformation by binding to the same site as the amobile flap. In contrast, mizoribine monophosphate (MZP) is a competitive inhibitor that induces the closed conformation. MPA is a potent inhibitor of mammalian IMPDHs but a poor inhibitor of the bacterial enzymes. MZP is a more potent inhibitor of bacterial IMPDH. In terms of biological role, catalyzes the conversion of inosine 5'-phosphate (IMP) to xanthosine 5'-phosphate (XMP), the first committed and rate-limiting step in the de novo synthesis of guanine nucleotides, and therefore plays an important role in the regulation of cell growth. The polypeptide is Inosine-5'-monophosphate dehydrogenase (Halalkalibacterium halodurans (strain ATCC BAA-125 / DSM 18197 / FERM 7344 / JCM 9153 / C-125) (Bacillus halodurans)).